Consider the following 1043-residue polypeptide: Unconventional myosin-Ia (1043 aa).

Residues 8-694 (VGVEDLVLLE…TLFYLEEQRR (687 aa)) form the Myosin motor domain. 101 to 108 (GESGSGKT) lines the ATP pocket. Residues 571-593 (VAILMKNLYSKSPNYIRCIKPNE) are actin-binding. IQ domains lie at 697-719 (LQQL…HYQL), 720-742 (MRKS…CYGK), and 743-772 (IKAS…SEAA). The region spanning 858–1042 (KASYPQSVPI…KGSHCLEVTV (185 aa)) is the TH1 domain.

The protein belongs to the TRAFAC class myosin-kinesin ATPase superfamily. Myosin family. Phosphorylated by ALPK1.

Its function is as follows. Involved in directing the movement of organelles along actin filaments. In Homo sapiens (Human), this protein is Unconventional myosin-Ia (MYO1A).